The primary structure comprises 444 residues: UDP-N-acetylmuramate--L-alanine ligase (444 aa).

111–117 lines the ATP pocket; the sequence is GAHGKTS.

This sequence belongs to the MurCDEF family.

The protein localises to the cytoplasm. It catalyses the reaction UDP-N-acetyl-alpha-D-muramate + L-alanine + ATP = UDP-N-acetyl-alpha-D-muramoyl-L-alanine + ADP + phosphate + H(+). It functions in the pathway cell wall biogenesis; peptidoglycan biosynthesis. Functionally, cell wall formation. The protein is UDP-N-acetylmuramate--L-alanine ligase of Leuconostoc mesenteroides subsp. mesenteroides (strain ATCC 8293 / DSM 20343 / BCRC 11652 / CCM 1803 / JCM 6124 / NCDO 523 / NBRC 100496 / NCIMB 8023 / NCTC 12954 / NRRL B-1118 / 37Y).